The sequence spans 438 residues: tRNA-2-methylthio-N(6)-dimethylallyladenosine synthase (438 aa).

One can recognise an MTTase N-terminal domain in the interval 4–120; sequence KKLYIDTVGC…VPEMVKDAEA (117 aa). [4Fe-4S] cluster is bound by residues Cys-13, Cys-49, Cys-83, Cys-158, Cys-162, and Cys-165. One can recognise a Radical SAM core domain in the interval 144-377; the sequence is GRKRVSAFVT…QAVHSRIHNE (234 aa). Positions 377 to 438 constitute a TRAM domain; that stretch reads ETYVGSTQQV…YANSLLGELL (62 aa).

It belongs to the methylthiotransferase family. MiaB subfamily. In terms of assembly, monomer. [4Fe-4S] cluster is required as a cofactor.

The protein localises to the cytoplasm. It carries out the reaction N(6)-dimethylallyladenosine(37) in tRNA + (sulfur carrier)-SH + AH2 + 2 S-adenosyl-L-methionine = 2-methylsulfanyl-N(6)-dimethylallyladenosine(37) in tRNA + (sulfur carrier)-H + 5'-deoxyadenosine + L-methionine + A + S-adenosyl-L-homocysteine + 2 H(+). Catalyzes the methylthiolation of N6-(dimethylallyl)adenosine (i(6)A), leading to the formation of 2-methylthio-N6-(dimethylallyl)adenosine (ms(2)i(6)A) at position 37 in tRNAs that read codons beginning with uridine. In Trichlorobacter lovleyi (strain ATCC BAA-1151 / DSM 17278 / SZ) (Geobacter lovleyi), this protein is tRNA-2-methylthio-N(6)-dimethylallyladenosine synthase.